Consider the following 860-residue polypeptide: Leucine--tRNA ligase (860 aa).

The 'HIGH' region signature appears at 42-52 (PYPSGRLHMGH). The short motif at 619–623 (KMSKS) is the 'KMSKS' region element. Lys-622 provides a ligand contact to ATP.

It belongs to the class-I aminoacyl-tRNA synthetase family.

The protein resides in the cytoplasm. It carries out the reaction tRNA(Leu) + L-leucine + ATP = L-leucyl-tRNA(Leu) + AMP + diphosphate. This chain is Leucine--tRNA ligase, found in Histophilus somni (strain 2336) (Haemophilus somnus).